The sequence spans 904 residues: E3 ubiquitin-protein ligase HACE1 (904 aa).

ANK repeat units follow at residues 34–63, 68–97, 101–130, 134–163, 167–196, 200–230, and 232–261; these read AVYTLMPMVMADQHRSVSELLLNSKFDVNY, VKRSLLHIAANCGSVECLVLLLKRGANPNY, SGCTPLHLAARNGQKKCMGRLLEYNADVNI, EGLTAIHWLAVNGRTELLHDLVQHVTNVDV, MGQTALHVACQNGHKTTVQCLLDSGADINR, SGATPLYFACSHGQRDTAQILLLRGAKYLPD, and NGVTPLDLCVQGGYGETCEILIQHHGRLFQ. The region spanning 569–904 is the HECT domain; that stretch reads SNEKLKQGIA…HCGSYGYTMA (336 aa). Catalysis depends on cysteine 871, which acts as the Glycyl thioester intermediate.

Its subcellular location is the golgi apparatus. It is found in the golgi stack membrane. It localises to the cytoplasm. The protein resides in the endoplasmic reticulum. The enzyme catalyses S-ubiquitinyl-[E2 ubiquitin-conjugating enzyme]-L-cysteine + [acceptor protein]-L-lysine = [E2 ubiquitin-conjugating enzyme]-L-cysteine + N(6)-ubiquitinyl-[acceptor protein]-L-lysine.. Its pathway is protein modification; protein ubiquitination. Its function is as follows. E3 ubiquitin-protein ligase involved in Golgi membrane fusion and regulation of small GTPases. Acts as a regulator of Golgi membrane dynamics during the cell cycle: recruited to Golgi membrane by Rab proteins and regulates postmitotic Golgi membrane fusion. Acts by mediating ubiquitination during mitotic Golgi disassembly, ubiquitination serving as a signal for Golgi reassembly later, after cell division. The protein is E3 ubiquitin-protein ligase HACE1 (hace1) of Danio rerio (Zebrafish).